The primary structure comprises 328 residues: Diaminopimelate epimerase (328 aa).

2 residues coordinate substrate: Asn-14 and Asn-73. Residue Cys-82 is the Proton donor of the active site. Substrate is bound by residues 83-84 (GN), Asn-170, Asn-206, and 224-225 (ER). The Proton acceptor role is filled by Cys-233. 234 to 235 (GT) provides a ligand contact to substrate.

The protein belongs to the diaminopimelate epimerase family. Homodimer.

It localises to the cytoplasm. It catalyses the reaction (2S,6S)-2,6-diaminopimelate = meso-2,6-diaminopimelate. Its pathway is amino-acid biosynthesis; L-lysine biosynthesis via DAP pathway; DL-2,6-diaminopimelate from LL-2,6-diaminopimelate: step 1/1. Functionally, catalyzes the stereoinversion of LL-2,6-diaminopimelate (L,L-DAP) to meso-diaminopimelate (meso-DAP), a precursor of L-lysine and an essential component of the bacterial peptidoglycan. The chain is Diaminopimelate epimerase from Listeria welshimeri serovar 6b (strain ATCC 35897 / DSM 20650 / CCUG 15529 / CIP 8149 / NCTC 11857 / SLCC 5334 / V8).